The sequence spans 207 residues: Ribosomal RNA small subunit methyltransferase G (207 aa).

S-adenosyl-L-methionine is bound by residues glycine 76, glutamine 81, 127–128 (VE), and arginine 141.

The protein belongs to the methyltransferase superfamily. RNA methyltransferase RsmG family.

It is found in the cytoplasm. It carries out the reaction guanosine(527) in 16S rRNA + S-adenosyl-L-methionine = N(7)-methylguanosine(527) in 16S rRNA + S-adenosyl-L-homocysteine. Its function is as follows. Specifically methylates the N7 position of guanine in position 527 of 16S rRNA. The sequence is that of Ribosomal RNA small subunit methyltransferase G from Neisseria meningitidis serogroup C / serotype 2a (strain ATCC 700532 / DSM 15464 / FAM18).